The chain runs to 298 residues: Putative enoyl-CoA reductase (298 aa).

4 helical membrane passes run 162 to 182 (CVYY…PYYT), 189 to 209 (LVNA…AVHV), 229 to 249 (ILFS…WVAF), and 254 to 274 (SMLT…EWAV).

It belongs to the steroid 5-alpha reductase family.

The protein resides in the membrane. It participates in lipid metabolism; fatty acid biosynthesis. In terms of biological role, involved in the synthesis of fatty acids. This is Putative enoyl-CoA reductase from Trypanosoma brucei brucei (strain 927/4 GUTat10.1).